The sequence spans 246 residues: Flavin-dependent thymidylate synthase (246 aa).

In terms of domain architecture, ThyX spans 17–241 (VTVELVKHSA…PLTYAAFNTN (225 aa)). FAD contacts are provided by residues S69, 92-94 (RHR), and E101. DUMP is bound by residues 89 to 92 (EFMR), 101 to 105 (EESGR), and R173. Positions 92-103 (RHRVGWSYNEES) match the ThyX motif motif. FAD is bound by residues 189 to 191 (NAR) and H195. R200 is a binding site for dUMP. R200 serves as the catalytic Involved in ionization of N3 of dUMP, leading to its activation.

It belongs to the thymidylate synthase ThyX family. As to quaternary structure, homotetramer. The cofactor is FAD.

It carries out the reaction dUMP + (6R)-5,10-methylene-5,6,7,8-tetrahydrofolate + NADPH + H(+) = dTMP + (6S)-5,6,7,8-tetrahydrofolate + NADP(+). Its pathway is pyrimidine metabolism; dTTP biosynthesis. Functionally, catalyzes the reductive methylation of 2'-deoxyuridine-5'-monophosphate (dUMP) to 2'-deoxythymidine-5'-monophosphate (dTMP) while utilizing 5,10-methylenetetrahydrofolate (mTHF) as the methyl donor, and NADPH and FADH(2) as the reductant. The protein is Flavin-dependent thymidylate synthase of Streptomyces avermitilis (strain ATCC 31267 / DSM 46492 / JCM 5070 / NBRC 14893 / NCIMB 12804 / NRRL 8165 / MA-4680).